An 87-amino-acid polypeptide reads, in one-letter code: Class II metallothionein-like protein 1A (87 aa).

This sequence belongs to the metallothionein superfamily. Type 15 family. As to expression, expressed in developing seeds.

Functionally, metallothioneins have a high content of cysteine residues that bind various heavy metals. In Oryza sativa subsp. japonica (Rice), this protein is Class II metallothionein-like protein 1A (MT21A).